A 396-amino-acid chain; its full sequence is S-adenosylmethionine synthase (396 aa).

His-16 serves as a coordination point for ATP. Asp-18 contacts Mg(2+). Residue Glu-44 participates in K(+) binding. Residues Glu-57 and Gln-100 each coordinate L-methionine. The interval 100-110 is flexible loop; that stretch reads QSVDIAQGVDR. Residues 165–167, Asp-240, 246–247, Ala-263, and Lys-267 each bind ATP; these read DAK and RK. Asp-240 contacts L-methionine. Lys-271 is a binding site for L-methionine.

It belongs to the AdoMet synthase family. Homotetramer; dimer of dimers. It depends on Mg(2+) as a cofactor. K(+) serves as cofactor.

It localises to the cytoplasm. It catalyses the reaction L-methionine + ATP + H2O = S-adenosyl-L-methionine + phosphate + diphosphate. The protein operates within amino-acid biosynthesis; S-adenosyl-L-methionine biosynthesis; S-adenosyl-L-methionine from L-methionine: step 1/1. Catalyzes the formation of S-adenosylmethionine (AdoMet) from methionine and ATP. The overall synthetic reaction is composed of two sequential steps, AdoMet formation and the subsequent tripolyphosphate hydrolysis which occurs prior to release of AdoMet from the enzyme. The sequence is that of S-adenosylmethionine synthase from Stutzerimonas stutzeri (strain A1501) (Pseudomonas stutzeri).